The chain runs to 113 residues: UPF0122 protein LSEI_1603 (113 aa).

It belongs to the UPF0122 family.

In terms of biological role, might take part in the signal recognition particle (SRP) pathway. This is inferred from the conservation of its genetic proximity to ftsY/ffh. May be a regulatory protein. This Lacticaseibacillus paracasei (strain ATCC 334 / BCRC 17002 / CCUG 31169 / CIP 107868 / KCTC 3260 / NRRL B-441) (Lactobacillus paracasei) protein is UPF0122 protein LSEI_1603.